A 92-amino-acid chain; its full sequence is Small ribosomal subunit protein uS19c (92 aa).

The protein belongs to the universal ribosomal protein uS19 family.

The protein localises to the plastid. The protein resides in the chloroplast. In terms of biological role, protein S19 forms a complex with S13 that binds strongly to the 16S ribosomal RNA. The protein is Small ribosomal subunit protein uS19c of Nicotiana tomentosiformis (Tobacco).